A 238-amino-acid chain; its full sequence is Calmodulin-binding protein 25 (238 aa).

Over residues 68–78 the composition is skewed to polar residues; it reads STNTLSSTVSG. The disordered stretch occupies residues 68–87; the sequence is STNTLSSTVSGASDPEIIGG. The Bipartite nuclear localization signal signature appears at 92–108; sequence KRNCLLTDGKAAKRRAR. The short motif at 125-134 is the VQ element; it reads FRQMVQQVTG. The disordered stretch occupies residues 201–220; that stretch reads SSVGLPSGKPSATADPGGSA.

As to quaternary structure, interacts with calmodulin (CaM). Interacts with WRKY25 and WRKY51. As to expression, expressed in leaves, flowers and siliques.

It localises to the nucleus. Its function is as follows. Calmodulin-binding protein that functions as a negative regulator of osmotic stress tolerance. In Arabidopsis thaliana (Mouse-ear cress), this protein is Calmodulin-binding protein 25.